We begin with the raw amino-acid sequence, 115 residues long: Putative gamma-glutamylcyclotransferase VC_2546 (115 aa).

Position 8-11 (8-11) interacts with substrate; sequence YGTL. E73 serves as the catalytic Proton acceptor.

The protein belongs to the gamma-glutamylcyclotransferase family.

Its function is as follows. Putative gamma-glutamylcyclotransferase. The polypeptide is Putative gamma-glutamylcyclotransferase VC_2546 (Vibrio cholerae serotype O1 (strain ATCC 39315 / El Tor Inaba N16961)).